The primary structure comprises 275 residues: NH(3)-dependent NAD(+) synthetase (275 aa).

46 to 53 is a binding site for ATP; sequence GISGGQDS. A Mg(2+)-binding site is contributed by aspartate 52. Deamido-NAD(+) is bound at residue arginine 140. Threonine 160 lines the ATP pocket. A Mg(2+)-binding site is contributed by glutamate 165. The deamido-NAD(+) site is built by lysine 173 and aspartate 180. Lysine 189 and threonine 211 together coordinate ATP. 260 to 261 provides a ligand contact to deamido-NAD(+); sequence HK.

The protein belongs to the NAD synthetase family. In terms of assembly, homodimer.

The enzyme catalyses deamido-NAD(+) + NH4(+) + ATP = AMP + diphosphate + NAD(+) + H(+). It participates in cofactor biosynthesis; NAD(+) biosynthesis; NAD(+) from deamido-NAD(+) (ammonia route): step 1/1. Catalyzes the ATP-dependent amidation of deamido-NAD to form NAD. Uses ammonia as a nitrogen source. The sequence is that of NH(3)-dependent NAD(+) synthetase from Shigella boydii serotype 18 (strain CDC 3083-94 / BS512).